Consider the following 236-residue polypeptide: Cysteine-rich venom protein TRI1 (236 aa).

The first 18 residues, 1–18 (MIVFILLSLAAVLEQSFG), serve as a signal peptide directing secretion. The region spanning 37–165 (VDRHNSFRRS…GYSYFYVCQY (129 aa)) is the SCP domain. Cystine bridges form between Cys-74/Cys-152, Cys-91/Cys-166, Cys-147/Cys-163, Cys-185/Cys-192, Cys-188/Cys-197, Cys-201/Cys-234, Cys-210/Cys-228, and Cys-219/Cys-232. Positions 201-234 (CLREDKFTNCKSLVQQNSCQHDWTRKNCPATCFC) constitute a ShKT domain.

The protein belongs to the CRISP family. Expressed by the venom gland.

Its subcellular location is the secreted. Its function is as follows. Blocks contraction of smooth muscle elicited by high potassium-induced depolarization, but does not block caffeine-stimulated contraction. May target voltage-gated calcium channels on smooth muscle. The sequence is that of Cysteine-rich venom protein TRI1 from Trimorphodon biscutatus (Western lyre snake).